A 235-amino-acid chain; its full sequence is Pyridoxine 5'-phosphate synthase (235 aa).

Asn-6 contacts 3-amino-2-oxopropyl phosphate. 8-9 (DH) is a binding site for 1-deoxy-D-xylulose 5-phosphate. Arg-17 contacts 3-amino-2-oxopropyl phosphate. His-42 serves as the catalytic Proton acceptor. Residues Arg-44 and His-49 each coordinate 1-deoxy-D-xylulose 5-phosphate. Glu-69 functions as the Proton acceptor in the catalytic mechanism. Thr-99 lines the 1-deoxy-D-xylulose 5-phosphate pocket. The active-site Proton donor is His-189. 3-amino-2-oxopropyl phosphate-binding positions include Gly-190 and 211 to 212 (GH).

It belongs to the PNP synthase family. Homooctamer; tetramer of dimers.

The protein resides in the cytoplasm. The catalysed reaction is 3-amino-2-oxopropyl phosphate + 1-deoxy-D-xylulose 5-phosphate = pyridoxine 5'-phosphate + phosphate + 2 H2O + H(+). It participates in cofactor biosynthesis; pyridoxine 5'-phosphate biosynthesis; pyridoxine 5'-phosphate from D-erythrose 4-phosphate: step 5/5. In terms of biological role, catalyzes the complicated ring closure reaction between the two acyclic compounds 1-deoxy-D-xylulose-5-phosphate (DXP) and 3-amino-2-oxopropyl phosphate (1-amino-acetone-3-phosphate or AAP) to form pyridoxine 5'-phosphate (PNP) and inorganic phosphate. This Chlorobium chlorochromatii (strain CaD3) protein is Pyridoxine 5'-phosphate synthase.